The following is a 323-amino-acid chain: ADP-L-glycero-D-manno-heptose-6-epimerase (323 aa).

NADP(+)-binding positions include 10–11, 31–32, K38, K53, 75–79, and N92; these read FI, DN, and EGACS. Y139 serves as the catalytic Proton acceptor. K143 serves as a coordination point for NADP(+). Residue N168 participates in substrate binding. 2 residues coordinate NADP(+): V169 and K177. The active-site Proton acceptor is K177. Residues D179, K186, 200–203, R213, and Y277 each bind substrate; that span reads FGAY.

This sequence belongs to the NAD(P)-dependent epimerase/dehydratase family. HldD subfamily. As to quaternary structure, homopentamer. It depends on NADP(+) as a cofactor.

It catalyses the reaction ADP-D-glycero-beta-D-manno-heptose = ADP-L-glycero-beta-D-manno-heptose. Its pathway is nucleotide-sugar biosynthesis; ADP-L-glycero-beta-D-manno-heptose biosynthesis; ADP-L-glycero-beta-D-manno-heptose from D-glycero-beta-D-manno-heptose 7-phosphate: step 4/4. In terms of biological role, catalyzes the interconversion between ADP-D-glycero-beta-D-manno-heptose and ADP-L-glycero-beta-D-manno-heptose via an epimerization at carbon 6 of the heptose. The chain is ADP-L-glycero-D-manno-heptose-6-epimerase from Hydrogenovibrio crunogenus (strain DSM 25203 / XCL-2) (Thiomicrospira crunogena).